A 311-amino-acid polypeptide reads, in one-letter code: Putative dihydroorotate dehydrogenase A (fumarate) (311 aa).

Substrate is bound by residues lysine 45, asparagine 69–leucine 73, and asparagine 128. FMN is bound at residue lysine 45–threonine 46. Position 128 (asparagine 128) interacts with FMN. The active-site Nucleophile is cysteine 131. Lysine 165 and valine 193 together coordinate FMN. Asparagine 194 to serine 195 contacts substrate. FMN contacts are provided by residues glycine 220, glycine 248–glycine 249, and glycine 270–threonine 271.

It belongs to the dihydroorotate dehydrogenase family. Type 1 subfamily. In terms of assembly, homodimer. Requires FMN as cofactor.

It is found in the cytoplasm. It catalyses the reaction (S)-dihydroorotate + fumarate = orotate + succinate. It functions in the pathway pyrimidine metabolism; UMP biosynthesis via de novo pathway. Functionally, catalyzes the conversion of dihydroorotate to orotate with fumarate as the electron acceptor. The polypeptide is Putative dihydroorotate dehydrogenase A (fumarate) (pyrD) (Streptococcus equi subsp. equi (strain 4047)).